A 218-amino-acid chain; its full sequence is MFEGPLQDLIDELSRLPGVGPKSAQRIAFHLLNVDPDDITRLQDALGAVRDGVRFCRICCNISRDEVCRICNDSGRDRGLICVVEEPKDIQVIERTGEFRGRYHVLGGALDPLANVGPRELTISTLLQRIGGVLDDRELADSTPDTPLLDDKPQIHEVILATDPNTEGEATASYLARLLQDFPDLVVSRLASGMPLGGDLEFVDELTLSRALSGRLPL.

A C4-type zinc finger spans residues 56–71 (CRICCNISRDEVCRIC). The region spanning 79 to 195 (GLICVVEEPK…VVSRLASGMP (117 aa)) is the Toprim domain.

This sequence belongs to the RecR family.

Its function is as follows. May play a role in DNA repair. It seems to be involved in an RecBC-independent recombinational process of DNA repair. It may act with RecF and RecO. The polypeptide is Recombination protein RecR (Corynebacterium efficiens (strain DSM 44549 / YS-314 / AJ 12310 / JCM 11189 / NBRC 100395)).